A 60-amino-acid chain; its full sequence is UPF0181 protein PMI1604 (60 aa).

Belongs to the UPF0181 family.

The polypeptide is UPF0181 protein PMI1604 (Proteus mirabilis (strain HI4320)).